The primary structure comprises 436 residues: GTPase Der (436 aa).

EngA-type G domains are found at residues 4–167 (PTVA…PVEE) and 175–351 (IRFS…ESQN). GTP contacts are provided by residues 10–17 (GRPNVGKS), 57–61 (DTGGI), 119–122 (NKVD), 181–188 (GRPNVGKS), 229–233 (DTAGM), and 294–297 (NKWD). The region spanning 352–436 (KRIPSAVLND…PIHLIARKRK (85 aa)) is the KH-like domain.

The protein belongs to the TRAFAC class TrmE-Era-EngA-EngB-Septin-like GTPase superfamily. EngA (Der) GTPase family. As to quaternary structure, associates with the 50S ribosomal subunit.

GTPase that plays an essential role in the late steps of ribosome biogenesis. In Streptococcus pyogenes serotype M1, this protein is GTPase Der.